Consider the following 549-residue polypeptide: Glucose-6-phosphate isomerase (549 aa).

Glutamate 355 (proton donor) is an active-site residue. Residues histidine 386 and lysine 514 contribute to the active site.

The protein belongs to the GPI family.

Its subcellular location is the cytoplasm. It catalyses the reaction alpha-D-glucose 6-phosphate = beta-D-fructose 6-phosphate. The protein operates within carbohydrate biosynthesis; gluconeogenesis. It functions in the pathway carbohydrate degradation; glycolysis; D-glyceraldehyde 3-phosphate and glycerone phosphate from D-glucose: step 2/4. Catalyzes the reversible isomerization of glucose-6-phosphate to fructose-6-phosphate. In Klebsiella pneumoniae (strain 342), this protein is Glucose-6-phosphate isomerase.